We begin with the raw amino-acid sequence, 429 residues long: L-threonine dehydratase biosynthetic IlvA (429 aa).

Lys66 is subject to N6-(pyridoxal phosphate)lysine. Residues Asn93, 196–200, and Ser322 each bind pyridoxal 5'-phosphate; that span reads GGGGC. Residues 346–420 form the ACT-like domain; the sequence is HYFLVDFPQE…TDIHVEALEP (75 aa).

Belongs to the serine/threonine dehydratase family. In terms of assembly, homotetramer. Pyridoxal 5'-phosphate serves as cofactor.

The catalysed reaction is L-threonine = 2-oxobutanoate + NH4(+). The protein operates within amino-acid biosynthesis; L-isoleucine biosynthesis; 2-oxobutanoate from L-threonine: step 1/1. Functionally, catalyzes the anaerobic formation of alpha-ketobutyrate and ammonia from threonine in a two-step reaction. The first step involved a dehydration of threonine and a production of enamine intermediates (aminocrotonate), which tautomerizes to its imine form (iminobutyrate). Both intermediates are unstable and short-lived. The second step is the nonenzymatic hydrolysis of the enamine/imine intermediates to form 2-ketobutyrate and free ammonia. In the low water environment of the cell, the second step is accelerated by RidA. This chain is L-threonine dehydratase biosynthetic IlvA (ilvA), found in Mycobacterium bovis (strain ATCC BAA-935 / AF2122/97).